The sequence spans 443 residues: Probable glycine dehydrogenase (decarboxylating) subunit 1 (443 aa).

It belongs to the GcvP family. N-terminal subunit subfamily. In terms of assembly, the glycine cleavage system is composed of four proteins: P, T, L and H. In this organism, the P 'protein' is a heterodimer of two subunits.

It carries out the reaction N(6)-[(R)-lipoyl]-L-lysyl-[glycine-cleavage complex H protein] + glycine + H(+) = N(6)-[(R)-S(8)-aminomethyldihydrolipoyl]-L-lysyl-[glycine-cleavage complex H protein] + CO2. Functionally, the glycine cleavage system catalyzes the degradation of glycine. The P protein binds the alpha-amino group of glycine through its pyridoxal phosphate cofactor; CO(2) is released and the remaining methylamine moiety is then transferred to the lipoamide cofactor of the H protein. The chain is Probable glycine dehydrogenase (decarboxylating) subunit 1 from Nitratidesulfovibrio vulgaris (strain ATCC 29579 / DSM 644 / CCUG 34227 / NCIMB 8303 / VKM B-1760 / Hildenborough) (Desulfovibrio vulgaris).